Consider the following 574-residue polypeptide: Proline--tRNA ligase (574 aa).

The protein belongs to the class-II aminoacyl-tRNA synthetase family. ProS type 1 subfamily. In terms of assembly, homodimer.

It is found in the cytoplasm. It carries out the reaction tRNA(Pro) + L-proline + ATP = L-prolyl-tRNA(Pro) + AMP + diphosphate. Catalyzes the attachment of proline to tRNA(Pro) in a two-step reaction: proline is first activated by ATP to form Pro-AMP and then transferred to the acceptor end of tRNA(Pro). As ProRS can inadvertently accommodate and process non-cognate amino acids such as alanine and cysteine, to avoid such errors it has two additional distinct editing activities against alanine. One activity is designated as 'pretransfer' editing and involves the tRNA(Pro)-independent hydrolysis of activated Ala-AMP. The other activity is designated 'posttransfer' editing and involves deacylation of mischarged Ala-tRNA(Pro). The misacylated Cys-tRNA(Pro) is not edited by ProRS. This chain is Proline--tRNA ligase, found in Oleidesulfovibrio alaskensis (strain ATCC BAA-1058 / DSM 17464 / G20) (Desulfovibrio alaskensis).